Reading from the N-terminus, the 256-residue chain is Type III pantothenate kinase (256 aa).

6–13 (DCGNTNTV) serves as a coordination point for ATP. 107–110 (GPDR) contributes to the substrate binding site. D109 serves as the catalytic Proton acceptor. D129 lines the K(+) pocket. Residue T132 coordinates ATP. Position 184 (T184) interacts with substrate.

It belongs to the type III pantothenate kinase family. In terms of assembly, homodimer. The cofactor is NH4(+). Requires K(+) as cofactor.

It is found in the cytoplasm. The enzyme catalyses (R)-pantothenate + ATP = (R)-4'-phosphopantothenate + ADP + H(+). Its pathway is cofactor biosynthesis; coenzyme A biosynthesis; CoA from (R)-pantothenate: step 1/5. In terms of biological role, catalyzes the phosphorylation of pantothenate (Pan), the first step in CoA biosynthesis. The chain is Type III pantothenate kinase from Dinoroseobacter shibae (strain DSM 16493 / NCIMB 14021 / DFL 12).